The primary structure comprises 567 residues: MFLDFIDQVTSILNDAVSSAGFEADDMELGPSQHADLSSRIAFRLASVAKQSPKDVAEKIAGEIVIPKGSFVEKVEALGPYLNIWAGRNFIEGTVLAIREQKEAFGGNFSEGRILLEHTSANPNGPLHVGHIRNSIIGDTLGRILKRAGYDVELHYYVNDMGRQIAIVSWALGYFEFDESSKPDHAIADVYIKANAELNAHPEKVAEIDKLMQLVEKGDAATIETFDKAVDLAVSGIKETLKKMNVAHDEFPKESSFIRSGDVSRIIEEIKATGRTEIDNGALVVNLQDYGFKKTLVIQRTDGTSLYTTRDLAYHEWKGERADRIIDVFGADHKLISGQLKATLNAIGKKEPEFVIFEFVSLPEGSMSTRSGKFISADDLLDQIKTQAYEEVDKRRPDMPDDFKATVAEIVGIGAVRYDIVKVSPEKSTVFDWKEALDFEKQGGPFIQYSHARACSILQKAKDEGLWSSEEPINTTLLVEDSEVSLIKKMAMFDNMLDQCAKELRPHTFAIYARELADAFNQFYRFVSVLNAEDEQLRSSRIALVDCARMVLANTLDTLGLGAPESM.

The 'HIGH' region motif lies at 121–131 (ANPNGPLHVGH).

The protein belongs to the class-I aminoacyl-tRNA synthetase family.

The protein resides in the cytoplasm. It catalyses the reaction tRNA(Arg) + L-arginine + ATP = L-arginyl-tRNA(Arg) + AMP + diphosphate. This Methanococcoides burtonii (strain DSM 6242 / NBRC 107633 / OCM 468 / ACE-M) protein is Arginine--tRNA ligase.